A 429-amino-acid polypeptide reads, in one-letter code: UPF0053 protein YugS (429 aa).

The next 4 membrane-spanning stretches (helical) occupy residues 1–21 (MLIL…VFVA), 61–81 (ACQL…EPTF), 101–121 (IVTF…MGEL), and 133–153 (AVSL…YPFI). A CNNM transmembrane domain is found at 1–201 (MLILQLIAIF…YEKGEINQSE (201 aa)). 2 CBS domains span residues 220–281 (MIPR…PIKL) and 284–341 (IMRP…IRDE).

This sequence belongs to the UPF0053 family.

It is found in the cell membrane. This chain is UPF0053 protein YugS (yugS), found in Bacillus subtilis (strain 168).